A 155-amino-acid chain; its full sequence is Interleukin-2 (155 aa).

The N-terminal stretch at 1–20 (MYKIQLLSCIALTLALVANG) is a signal peptide. The O-linked (GalNAc...) threonine glycan is linked to T23. A disulfide bridge connects residues C79 and C127.

Belongs to the IL-2 family.

It is found in the secreted. Functionally, cytokine produced by activated CD4-positive helper T-cells and to a lesser extend activated CD8-positive T-cells and natural killer (NK) cells that plays pivotal roles in the immune response and tolerance. Binds to a receptor complex composed of either the high-affinity trimeric IL-2R (IL2RA/CD25, IL2RB/CD122 and IL2RG/CD132) or the low-affinity dimeric IL-2R (IL2RB and IL2RG). Interaction with the receptor leads to oligomerization and conformation changes in the IL-2R subunits resulting in downstream signaling starting with phosphorylation of JAK1 and JAK3. In turn, JAK1 and JAK3 phosphorylate the receptor to form a docking site leading to the phosphorylation of several substrates including STAT5. This process leads to activation of several pathways including STAT, phosphoinositide-3-kinase/PI3K and mitogen-activated protein kinase/MAPK pathways. Functions as a T-cell growth factor and can increase NK-cell cytolytic activity as well. Promotes strong proliferation of activated B-cells and subsequently immunoglobulin production. Plays a pivotal role in regulating the adaptive immune system by controlling the survival and proliferation of regulatory T-cells, which are required for the maintenance of immune tolerance. Moreover, participates in the differentiation and homeostasis of effector T-cell subsets, including Th1, Th2, Th17 as well as memory CD8-positive T-cells. The chain is Interleukin-2 (IL2) from Ovis aries (Sheep).